The sequence spans 396 residues: Ribosomal RNA large subunit methyltransferase I (396 aa).

A PUA domain is found at 2 to 81 (SVRLVLTKGR…ETIDIAFFTR (80 aa)).

This sequence belongs to the methyltransferase superfamily. RlmI family.

The protein localises to the cytoplasm. It carries out the reaction cytidine(1962) in 23S rRNA + S-adenosyl-L-methionine = 5-methylcytidine(1962) in 23S rRNA + S-adenosyl-L-homocysteine + H(+). In terms of biological role, specifically methylates the cytosine at position 1962 (m5C1962) of 23S rRNA. In Enterobacter sp. (strain 638), this protein is Ribosomal RNA large subunit methyltransferase I.